The primary structure comprises 579 residues: Glutamine--tRNA ligase (579 aa).

The 'HIGH' region signature appears at 41–51 (PEPNGYLHIGH). ATP-binding positions include 42–44 (EPN) and 48–54 (HIGHAKA). L-glutamine-binding residues include D74 and Y218. ATP-binding positions include T237, 285 to 286 (RL), and 293 to 295 (MSK). A 'KMSKS' region motif is present at residues 292 to 296 (VMSKR).

The protein belongs to the class-I aminoacyl-tRNA synthetase family. Monomer.

The protein resides in the cytoplasm. It catalyses the reaction tRNA(Gln) + L-glutamine + ATP = L-glutaminyl-tRNA(Gln) + AMP + diphosphate. The sequence is that of Glutamine--tRNA ligase from Xanthomonas euvesicatoria pv. vesicatoria (strain 85-10) (Xanthomonas campestris pv. vesicatoria).